We begin with the raw amino-acid sequence, 444 residues long: Tubulin beta chain (444 aa).

The MREI motif motif lies at Met1 to Ile4. Residues Gln11, Glu69, Ser138, Gly142, Thr143, Gly144, Asn204, and Asn226 each contribute to the GTP site. A Mg(2+)-binding site is contributed by Glu69. The tract at residues Glu421 to Ala444 is disordered. A compositionally biased stretch (acidic residues) spans Thr429–Ala444. Residue Glu438 is modified to 5-glutamyl polyglutamate.

It belongs to the tubulin family. In terms of assembly, dimer of alpha and beta chains. A typical microtubule is a hollow water-filled tube with an outer diameter of 25 nm and an inner diameter of 15 nM. Alpha-beta heterodimers associate head-to-tail to form protofilaments running lengthwise along the microtubule wall with the beta-tubulin subunit facing the microtubule plus end conferring a structural polarity. Microtubules usually have 13 protofilaments but different protofilament numbers can be found in some organisms and specialized cells. Requires Mg(2+) as cofactor. In terms of processing, some glutamate residues at the C-terminus are polyglycylated, resulting in polyglycine chains on the gamma-carboxyl group. Glycylation is mainly limited to tubulin incorporated into axonemes (cilia and flagella) whereas glutamylation is prevalent in neuronal cells, centrioles, axonemes, and the mitotic spindle. Both modifications can coexist on the same protein on adjacent residues, and lowering polyglycylation levels increases polyglutamylation, and reciprocally. The precise function of polyglycylation is still unclear. Post-translationally, some glutamate residues at the C-terminus are polyglutamylated, resulting in polyglutamate chains on the gamma-carboxyl group. Polyglutamylation plays a key role in microtubule severing by spastin (SPAST). SPAST preferentially recognizes and acts on microtubules decorated with short polyglutamate tails: severing activity by SPAST increases as the number of glutamates per tubulin rises from one to eight, but decreases beyond this glutamylation threshold.

The protein localises to the cytoplasm. Its subcellular location is the cytoskeleton. Functionally, tubulin is the major constituent of microtubules, a cylinder consisting of laterally associated linear protofilaments composed of alpha- and beta-tubulin heterodimers. Microtubules grow by the addition of GTP-tubulin dimers to the microtubule end, where a stabilizing cap forms. Below the cap, tubulin dimers are in GDP-bound state, owing to GTPase activity of alpha-tubulin. In Xenopus laevis (African clawed frog), this protein is Tubulin beta chain (tubb).